Here is a 420-residue protein sequence, read N- to C-terminus: Tyrosine--tRNA ligase (420 aa).

Y38 is a binding site for L-tyrosine. Positions 43-52 (PTGDSLHIGH) match the 'HIGH' region motif. Residues Y169 and Q173 each coordinate L-tyrosine. The 'KMSKS' region motif lies at 231–235 (KFGKS). ATP is bound at residue K234. The S4 RNA-binding domain maps to 353–419 (KNIVDFLVDT…GKRKYTLVTI (67 aa)).

It belongs to the class-I aminoacyl-tRNA synthetase family. TyrS type 1 subfamily. As to quaternary structure, homodimer.

Its subcellular location is the cytoplasm. The catalysed reaction is tRNA(Tyr) + L-tyrosine + ATP = L-tyrosyl-tRNA(Tyr) + AMP + diphosphate + H(+). In terms of biological role, catalyzes the attachment of tyrosine to tRNA(Tyr) in a two-step reaction: tyrosine is first activated by ATP to form Tyr-AMP and then transferred to the acceptor end of tRNA(Tyr). The polypeptide is Tyrosine--tRNA ligase (Lactobacillus acidophilus (strain ATCC 700396 / NCK56 / N2 / NCFM)).